Here is a 513-residue protein sequence, read N- to C-terminus: ATP synthase subunit beta (513 aa).

Positions 1–29 are disordered; the sequence is MATAPATEKKAPAKKAAAPKAAAPKKAAA. Over residues 14-29 the composition is skewed to low complexity; it reads KKAAAPKAAAPKKAAA. An ATP-binding site is contributed by 186-193; sequence GGAGVGKT.

The protein belongs to the ATPase alpha/beta chains family. As to quaternary structure, F-type ATPases have 2 components, CF(1) - the catalytic core - and CF(0) - the membrane proton channel. CF(1) has five subunits: alpha(3), beta(3), gamma(1), delta(1), epsilon(1). CF(0) has three main subunits: a(1), b(2) and c(9-12). The alpha and beta chains form an alternating ring which encloses part of the gamma chain. CF(1) is attached to CF(0) by a central stalk formed by the gamma and epsilon chains, while a peripheral stalk is formed by the delta and b chains.

It localises to the cell inner membrane. The enzyme catalyses ATP + H2O + 4 H(+)(in) = ADP + phosphate + 5 H(+)(out). Produces ATP from ADP in the presence of a proton gradient across the membrane. The catalytic sites are hosted primarily by the beta subunits. The sequence is that of ATP synthase subunit beta from Sphingopyxis alaskensis (strain DSM 13593 / LMG 18877 / RB2256) (Sphingomonas alaskensis).